Reading from the N-terminus, the 621-residue chain is Glutathione-regulated potassium-efflux system protein KefC (621 aa).

Helical transmembrane passes span 4–24 (HTLI…PVAV), 26–46 (LGLG…PWGF), 54–74 (SILH…GLEL), 90–110 (GALQ…LLGM), 114–134 (VAEL…MQAM), 151–171 (VLLF…LLAV), 178–198 (LGAF…VILL), 218–238 (VFSA…EEAG), 270–290 (GLLL…GTLV), 294–314 (LRIL…LWLI), 327–347 (WFAV…GAAQ), and 359–379 (ALTL…VLLT). One can recognise an RCK N-terminal domain in the interval 399–518 (QPRVIIAGFG…AGVETPERET (120 aa)). Residues 591–621 (LSLTQRHGWQGTEEGKHTGDPRDEPESKPTV) form a disordered region. The span at 603 to 621 (EEGKHTGDPRDEPESKPTV) shows a compositional bias: basic and acidic residues.

The protein belongs to the monovalent cation:proton antiporter 2 (CPA2) transporter (TC 2.A.37) family. KefC subfamily. Homodimer. Interacts with the regulatory subunit KefF.

It is found in the cell inner membrane. Pore-forming subunit of a potassium efflux system that confers protection against electrophiles. Catalyzes K(+)/H(+) antiport. The sequence is that of Glutathione-regulated potassium-efflux system protein KefC from Enterobacter sp. (strain 638).